We begin with the raw amino-acid sequence, 184 residues long: MKPLSNENLNILVLKSRSGDNASLNKIFNYFGPFIKSFTKNIYIRNFDKSDIYEECNFSILLSIKKCDIKKYNFTAYTISSIKNNIYYKIRNQAKFQSELSLNAKVTDQNCTFQDILIDKTNHFKNLSIKNALTSLDKKEQDIIDHIYFLGYSSIEYSKKSGINYRTCLRRKNSALKKLKRKLN.

This is an uncharacterized protein from Clostridium acetobutylicum (strain ATCC 824 / DSM 792 / JCM 1419 / IAM 19013 / LMG 5710 / NBRC 13948 / NRRL B-527 / VKM B-1787 / 2291 / W).